The following is a 467-amino-acid chain: GTPase Der (467 aa).

EngA-type G domains follow at residues 25–188 (PVVA…PEAP) and 199–372 (RRVA…ASWE). GTP is bound by residues 31 to 38 (GRPNVGKS), 78 to 82 (DTGGW), 140 to 143 (NKAD), 205 to 212 (GRPNVGKS), 252 to 256 (DTAGL), and 317 to 320 (NKWD). The 83-residue stretch at 373 to 455 (TRVPTAQLNA…PIEISVRARK (83 aa)) folds into the KH-like domain.

Belongs to the TRAFAC class TrmE-Era-EngA-EngB-Septin-like GTPase superfamily. EngA (Der) GTPase family. As to quaternary structure, associates with the 50S ribosomal subunit.

In terms of biological role, GTPase that plays an essential role in the late steps of ribosome biogenesis. This Salinispora tropica (strain ATCC BAA-916 / DSM 44818 / JCM 13857 / NBRC 105044 / CNB-440) protein is GTPase Der.